We begin with the raw amino-acid sequence, 214 residues long: Probable nicotinate-nucleotide adenylyltransferase (214 aa).

Belongs to the NadD family.

The catalysed reaction is nicotinate beta-D-ribonucleotide + ATP + H(+) = deamido-NAD(+) + diphosphate. It functions in the pathway cofactor biosynthesis; NAD(+) biosynthesis; deamido-NAD(+) from nicotinate D-ribonucleotide: step 1/1. Its function is as follows. Catalyzes the reversible adenylation of nicotinate mononucleotide (NaMN) to nicotinic acid adenine dinucleotide (NaAD). The protein is Probable nicotinate-nucleotide adenylyltransferase of Rubrobacter xylanophilus (strain DSM 9941 / JCM 11954 / NBRC 16129 / PRD-1).